Reading from the N-terminus, the 498-residue chain is Protein adenylyltransferase Fic (498 aa).

A helical membrane pass occupies residues 43–63; sequence FAFLAFLAGSFLAFSLHALIS. 2 TPR repeats span residues 126-159 and 160-194; these read ALSSLRLAQDMYMAGKDDKAARLFEHALALAPRH and PEVLLRYGEFLEHNQRNIVLADQYYFQALTINPSH. The Inhibitory (S/T)XXXE(G/N) motif motif lies at 251-256; sequence SVGIEG. ATP is bound by residues glutamate 255 and 336–339; that span reads VGGH. Residues 305 to 440 form the Fido domain; it reads ITIKDILELH…IRPFVRFIAD (136 aa). Histidine 383 is an active-site residue. ATP contacts are provided by residues 387 to 394, 419 to 420, and asparagine 427; these read DGNGRTSR and YY.

It belongs to the fic family. As to quaternary structure, homodimer.

The protein resides in the membrane. The catalysed reaction is L-tyrosyl-[protein] + ATP = O-(5'-adenylyl)-L-tyrosyl-[protein] + diphosphate. The enzyme catalyses L-threonyl-[protein] + ATP = 3-O-(5'-adenylyl)-L-threonyl-[protein] + diphosphate. It catalyses the reaction 3-O-(5'-adenylyl)-L-threonyl-[protein] + H2O = L-threonyl-[protein] + AMP + H(+). With respect to regulation, the side chain of Glu-255 determines which of the two opposing activities (AMPylase or de-AMPylase) will take place. In response to endoplasmic reticulum stress, mediates de-AMPylase activity. Adenylyltransferase activity is inhibited by the inhibitory helix present at the N-terminus: Glu-255 binds ATP and competes with ATP-binding at Arg-394, thereby preventing adenylyltransferase activity. In unstressed cells, disengagement of Glu-255 promotes adenylyltransferase activity. Activation dissociates ATP-binding from Glu-255, allowing ordered binding of the entire ATP moiety with the alpha-phosphate in an orientation that is productive for accepting an incoming target hydroxyl side chain. Protein that can both mediate the addition of adenosine 5'-monophosphate (AMP) to specific residues of target proteins (AMPylation), and the removal of the same modification from target proteins (de-AMPylation), depending on the context. The side chain of Glu-255 determines which of the two opposing activities (AMPylase or de-AMPylase) will take place. Acts as a key regulator of the unfolded protein response (UPR) by mediating AMPylation or de-AMPylation of Hsc70-3/BiP. In unstressed cells, acts as an adenylyltransferase by mediating AMPylation of Hsc70-3/BiP at 'Thr-518', thereby inactivating it. In response to endoplasmic reticulum stress, acts as a phosphodiesterase by mediating removal of ATP (de-AMPylation) from Hsc70-3/BiP at 'Thr-518', leading to restore HSPA5/BiP activity. The polypeptide is Protein adenylyltransferase Fic (Drosophila willistoni (Fruit fly)).